The sequence spans 179 residues: Methylated-DNA--protein-cysteine methyltransferase (179 aa).

Cysteine 130 functions as the Nucleophile; methyl group acceptor in the catalytic mechanism.

The protein belongs to the MGMT family.

The protein resides in the cytoplasm. It carries out the reaction a 6-O-methyl-2'-deoxyguanosine in DNA + L-cysteinyl-[protein] = S-methyl-L-cysteinyl-[protein] + a 2'-deoxyguanosine in DNA. The catalysed reaction is a 4-O-methyl-thymidine in DNA + L-cysteinyl-[protein] = a thymidine in DNA + S-methyl-L-cysteinyl-[protein]. Its function is as follows. Involved in the cellular defense against the biological effects of O6-methylguanine (O6-MeG) and O4-methylthymine (O4-MeT) in DNA. Repairs the methylated nucleobase in DNA by stoichiometrically transferring the methyl group to a cysteine residue in the enzyme. This is a suicide reaction: the enzyme is irreversibly inactivated. The sequence is that of Methylated-DNA--protein-cysteine methyltransferase from Haemophilus influenzae (strain ATCC 51907 / DSM 11121 / KW20 / Rd).